The following is a 1224-amino-acid chain: Tyrosine-protein kinase abl-1 (1224 aa).

Residues 115 to 188 (SSAPLFVALY…PSNFIAPYNS (74 aa)) enclose the SH3 domain. One can recognise an SH2 domain in the interval 194–284 (WYHGKISRSD…GLICLLMYPA (91 aa)). The Protein kinase domain maps to 311–562 (IIMHNKLGGG…PRFRDIHFNL (252 aa)). Residues 317–325 (LGGGQYGDV), Lys340, and 385–391 (EFMCNGN) contribute to the ATP site. The active-site Proton acceptor is Asp432. A Kinase activation loop motif is present at residues 450–474 (DFGLARFMKEDTYTAHAGAKFPIKW). Residues 579–620 (LKKNNDKKLESDKRRSNVRERSDSKSRHSSHHDRDRDRESLH) show a composition bias toward basic and acidic residues. 5 disordered regions span residues 579–671 (LKKN…NTKP), 736–775 (KEST…STYV), 796–881 (KRSE…DVGM), 914–937 (LRHV…ATDN), and 968–1016 (RPFS…RSNG). Polar residues-rich tracts occupy residues 639 to 655 (SVSF…TSFR) and 746 to 760 (AGSS…NDSL). Basic and acidic residues-rich tracts occupy residues 797–819 (RSET…KSEK) and 864–877 (PDSK…ETTK). Positions 973-984 (QCPNNSTSSAIS) are enriched in polar residues. Residues 1001–1016 (YEERMKPELPRKRSNG) show a composition bias toward basic and acidic residues.

This sequence belongs to the protein kinase superfamily. Tyr protein kinase family. ABL subfamily. As to quaternary structure, interacts (via SH2 and SH3 domains) with mig-13; the interaction is direct. May interact with soem-1.

The protein resides in the cell membrane. It localises to the cytoplasm. It carries out the reaction L-tyrosyl-[protein] + ATP = O-phospho-L-tyrosyl-[protein] + ADP + H(+). Functions downstream of migratory protein mig-13 and is involved in Q neuroblast migration during larval development. Recruited by mig-13 to the leading edge of Q neuroblasts and their descendents to signal downstream, likely to the wve-1 pathway, and direct migration along the anteroposterior body axis. Promotes germline cell apoptosis in response to oxidative, osmotic and heat shock stresses. The chain is Tyrosine-protein kinase abl-1 (abl-1) from Caenorhabditis elegans.